Here is a 74-residue protein sequence, read N- to C-terminus: Tetrahydromethanopterin S-methyltransferase subunit G (74 aa).

A helical membrane pass occupies residues 47-67 (VGIAYGLAIGFIFVYVLGTVL).

Belongs to the MtrG family. The complex is composed of 8 subunits; MtrA, MtrB, MtrC, MtrD, MtrE, MtrF, MtrG and MtrH.

It localises to the cell membrane. It catalyses the reaction 5-methyl-5,6,7,8-tetrahydromethanopterin + coenzyme M + 2 Na(+)(in) = 5,6,7,8-tetrahydromethanopterin + methyl-coenzyme M + 2 Na(+)(out). The protein operates within one-carbon metabolism; methanogenesis from CO(2); methyl-coenzyme M from 5,10-methylene-5,6,7,8-tetrahydromethanopterin: step 2/2. Its function is as follows. Part of a complex that catalyzes the formation of methyl-coenzyme M and tetrahydromethanopterin from coenzyme M and methyl-tetrahydromethanopterin. This is an energy-conserving, sodium-ion translocating step. In Methanococcus maripaludis (strain DSM 14266 / JCM 13030 / NBRC 101832 / S2 / LL), this protein is Tetrahydromethanopterin S-methyltransferase subunit G.